Here is a 100-residue protein sequence, read N- to C-terminus: MASVNIKPLEDKILVQANEAETTTASGLVIPDTAKEKPQEGTVVAVGPGRWDEDGEKRIPLDVAEGDTVIYSKYGGTEIKYNGEEYLILSARDVLAVVSK.

Belongs to the GroES chaperonin family. As to quaternary structure, heptamer of 7 subunits arranged in a ring. Interacts with the chaperonin GroEL.

Its subcellular location is the cytoplasm. Together with the chaperonin GroEL, plays an essential role in assisting protein folding. The GroEL-GroES system forms a nano-cage that allows encapsulation of the non-native substrate proteins and provides a physical environment optimized to promote and accelerate protein folding. GroES binds to the apical surface of the GroEL ring, thereby capping the opening of the GroEL channel. The chain is Co-chaperonin GroES from Mycolicibacterium smegmatis (strain ATCC 700084 / mc(2)155) (Mycobacterium smegmatis).